A 178-amino-acid polypeptide reads, in one-letter code: Gluconokinase (178 aa).

19-26 (GVSGTGKT) lines the ATP pocket.

Belongs to the gluconokinase GntK/GntV family. As to quaternary structure, monomer.

It catalyses the reaction D-gluconate + ATP = 6-phospho-D-gluconate + ADP + H(+). The protein operates within carbohydrate acid metabolism; D-gluconate degradation. With respect to regulation, activated by magnesium. Functionally, phosphorylates gluconate to 6-phosphogluconate. In Gluconobacter oxydans (strain 621H) (Gluconobacter suboxydans), this protein is Gluconokinase.